We begin with the raw amino-acid sequence, 508 residues long: Fibroblast growth factor receptor substrate 2 (508 aa).

G2 carries N-myristoyl glycine lipidation. Residues 13–115 (VPDNHRNKFK…QNNSINVVEE (103 aa)) form the IRS-type PTB domain. Over residues 122-131 (NHQTELEVPR) the composition is skewed to basic and acidic residues. The segment at 122–180 (NHQTELEVPRTPRTPTTPGFAAQNLPNGYPRYPSFGDASSHPSSRHPSVGSARLPSVGE) is disordered. S177 is modified (phosphoserine). Phosphotyrosine; by FGFR1 is present on Y196. Disordered stretches follow at residues 200-243 (TGVQ…PQIL) and 270-297 (QLGR…ERRD). Phosphoserine occurs at positions 211 and 221. A compositionally biased stretch (basic and acidic residues) spans 227–240 (TPKEEPSSIEDRDP). The span at 276 to 286 (VSGSGANNTEW) shows a compositional bias: polar residues. Phosphotyrosine; by FGFR1 is present on Y306. The tract at residues 315-338 (PSASGVRRGRLTSTSTSDTQNINN) is disordered. A compositionally biased stretch (polar residues) spans 325-338 (LTSTSTSDTQNINN). Phosphotyrosine; by FGFR1 is present on Y349. S365 carries the post-translational modification Phosphoserine. A disordered region spans residues 366–385 (RDEDDNLGPKTPSLNGYHNN). Phosphotyrosine; by FGFR1 occurs at positions 392 and 436. The segment at 441–467 (LEGGSDSDNPQTPKTPTTPLPQTPTRR) is disordered. The residue at position 471 (Y471) is a Phosphotyrosine; by FGFR1. The disordered stretch occupies residues 483–508 (SNLQKALPRDDGTSRKTRHNSTDLPM).

In terms of assembly, part of a complex containing FRS2, GRB2, GAB1, PIK3R1 and SOS1. Part of a complex containing GRB2 and CBL. Identified in a complex containing FGFR4, NCAM1, CDH2, PLCG1, FRS2, SRC, SHC1, GAP43 and CTTN. Binds RET. Binds ALK, FGFR1, CKS2, MAPK1/ERK2, MAPK3/ERK1 and SRC. The tyrosine-phosphorylated protein binds the SH2 domains of GRB2 and PTPN11. Interacts with NTRK1, NTRK2 and NTRK3 (phosphorylated upon ligand-binding). Post-translationally, phosphorylated by ULK2 in vitro. Phosphorylated on tyrosine residues upon stimulation by NGF or FGF2. Phosphorylated on tyrosine residues by activated ALK and FGFR1. Phosphorylated on tyrosine residues upon activation of FGFR2 and FGFR3. Phosphorylated on threonine residues by MAP kinases; this inhibits tyrosine phosphorylation, and thereby down-regulates FRS2-mediated activation of MAP kinases. In terms of processing, ubiquitinated when tyrosine phosphorylated and in a complex with GRB2. The unphosphorylated form is not subject to ubiquitination. Highly expressed in heart, brain, spleen, lung, liver, skeletal muscle, kidney and testis.

Its subcellular location is the endomembrane system. Adapter protein that links activated FGR and NGF receptors to downstream signaling pathways. Plays an important role in the activation of MAP kinases and in the phosphorylation of PIK3R1, the regulatory subunit of phosphatidylinositol 3-kinase, in response to ligand-mediated activation of FGFR1. Modulates signaling via SHC1 by competing for a common binding site on NTRK1. This chain is Fibroblast growth factor receptor substrate 2 (FRS2), found in Homo sapiens (Human).